We begin with the raw amino-acid sequence, 450 residues long: Phosphoglucosamine mutase (450 aa).

Catalysis depends on Ser-102, which acts as the Phosphoserine intermediate. 4 residues coordinate Mg(2+): Ser-102, Asp-242, Asp-244, and Asp-246. A Phosphoserine modification is found at Ser-102.

Belongs to the phosphohexose mutase family. Mg(2+) is required as a cofactor. Post-translationally, activated by phosphorylation.

The enzyme catalyses alpha-D-glucosamine 1-phosphate = D-glucosamine 6-phosphate. Its function is as follows. Catalyzes the conversion of glucosamine-6-phosphate to glucosamine-1-phosphate. The protein is Phosphoglucosamine mutase of Lachnospira eligens (strain ATCC 27750 / DSM 3376 / VPI C15-48 / C15-B4) (Eubacterium eligens).